Here is an 81-residue protein sequence, read N- to C-terminus: uncharacterized protein (81 aa).

This is an uncharacterized protein from Homo sapiens (Human).